The following is a 406-amino-acid chain: Cyclin-dependent kinase 4 homolog (406 aa).

The Protein kinase domain maps to 102–388 (TFLFQALGKG…ARGALSHPFL (287 aa)). ATP is bound by residues 108–116 (LGKGAYGNV) and K131. Residue D233 is the Proton acceptor of the active site. The Mg(2+) site is built by N238 and D251.

It belongs to the protein kinase superfamily. CMGC Ser/Thr protein kinase family. CDC2/CDKX subfamily. In terms of assembly, interacts with cyd-1; the interaction is likely involved in regulating cdk-4 activity. It depends on Mg(2+) as a cofactor.

It catalyses the reaction L-seryl-[protein] + ATP = O-phospho-L-seryl-[protein] + ADP + H(+). It carries out the reaction L-threonyl-[protein] + ATP = O-phospho-L-threonyl-[protein] + ADP + H(+). In terms of biological role, serine/threonine-protein kinase which, in association with cyclin D-like protein cyd-1, is required for the progression through the G1 phase of the cell cycle during postembryonic development by phosphorylating and inhibiting lin-35 and fzr-1. In complex with cyd-1, involved in sex determination during gonadogenesis by regulating the asymmetric division of the somatic gonadal precursor cell (SGP). This chain is Cyclin-dependent kinase 4 homolog, found in Caenorhabditis elegans.